A 72-amino-acid polypeptide reads, in one-letter code: MSKVCVLTGKKPKYGNNVSHANNHTRTRFEPNLHTKRIWIEEEKRWVKVRVSAKAMKIMSKTGTAELAKLLK.

This sequence belongs to the bacterial ribosomal protein bL28 family.

This Chlorobaculum parvum (strain DSM 263 / NCIMB 8327) (Chlorobium vibrioforme subsp. thiosulfatophilum) protein is Large ribosomal subunit protein bL28.